The following is a 697-amino-acid chain: Phosphate acetyltransferase (697 aa).

The phosphate acetyltransferase stretch occupies residues 366 to 697 (MFEHKLLEQA…QSPTEKASAQ (332 aa)).

It in the N-terminal section; belongs to the CobB/CobQ family. This sequence in the C-terminal section; belongs to the phosphate acetyltransferase and butyryltransferase family. In terms of assembly, homohexamer.

Its subcellular location is the cytoplasm. It catalyses the reaction acetyl-CoA + phosphate = acetyl phosphate + CoA. The protein operates within metabolic intermediate biosynthesis; acetyl-CoA biosynthesis; acetyl-CoA from acetate: step 2/2. Its function is as follows. Involved in acetate metabolism. This is Phosphate acetyltransferase (pta) from Streptomyces coelicolor (strain ATCC BAA-471 / A3(2) / M145).